The primary structure comprises 527 residues: Rhesus-like glycoprotein A (527 aa).

At 1–18 (MTHNDDDHKWVTTKRKEP) the chain is on the cytoplasmic side. The helical transmembrane segment at 19–39 (IFFTVILFIFQIFMIICFAAL) threads the bilayer. Residues 40–70 (TGYDTNKNYTGSENPDEFKGGEVQERVNNFY) are Extracellular-facing. Residue Asn47 is glycosylated (N-linked (GlcNAc...) asparagine). A helical membrane pass occupies residues 71–91 (GYFRDINIMIFFGFGFLMTFL). Over 92 to 99 (RRYGYSAL) the chain is Cytoplasmic. A helical membrane pass occupies residues 100 to 120 (GYTFIISALVSQWSVLLNGFF). Over 121–141 (EAWSHSNKHGEFPSTWEFSMD) the chain is Extracellular. The chain crosses the membrane as a helical span at residues 142–162 (SLLQGFFCSGSVMISYGAILG). At 163–166 (RVTP) the chain is on the cytoplasmic side. Residues 167-187 (LHMLIMGIIEPIFFFLNVFIG) form a helical membrane-spanning segment. Over 188 to 195 (EMNLEAID) the chain is Extracellular. A helical membrane pass occupies residues 196–216 (VGGGMYIHLFGSVFGLTVAWF). Topologically, residues 217–236 (LTDRKSKECTDNAPSYSGDN) are cytoplasmic. A helical transmembrane segment spans residues 237 to 257 (FAMAGTLFLWMMWPSFNAAIA). The Extracellular segment spans residues 258-263 (PLGEPQ). The helical transmembrane segment at 264–284 (FRAIANTFLSLTGSTVATFIV) threads the bilayer. At 285–299 (SRLFSHLGNKLDMVH) the chain is on the cytoplasmic side. Residues 300 to 319 (VQNSSLAGGVVQGCIAHMNI) form a helical membrane-spanning segment. Topologically, residues 320 to 321 (NP) are extracellular. A helical transmembrane segment spans residues 322–342 (GGAIAMGFIAGTISVCGYLFI). Topologically, residues 343 to 357 (TPKVQRKLHIQDTCG) are cytoplasmic. A helical membrane pass occupies residues 358–378 (ILNLHCIPGFLGSIAAIFAAI). Over 379–406 (KGLNNPNMYSKVEFEQIFRAGDSQASAN) the chain is Extracellular. Residues 407-427 (LIATMVSIGLGIVGGLLVGVI) traverse the membrane as a helical segment. Residues 428-527 (LLQLKKIKGL…EEDEFKQEPI (100 aa)) lie on the Cytoplasmic side of the membrane. The tract at residues 471 to 527 (SEDTAGGDDEEEGVGKEHGAVEMGKHNRIVQPKQDNKYHKQLPSDDEEEDEFKQEPI) is disordered. Basic and acidic residues predominate over residues 483–495 (GVGKEHGAVEMGK). Over residues 514-527 (SDDEEEDEFKQEPI) the composition is skewed to acidic residues.

It belongs to the ammonium transporter (TC 2.A.49) family. Rh subfamily. In terms of assembly, interacts with ap1g1.

It is found in the contractile vacuole. The protein resides in the membrane. In terms of biological role, may be a carbon dioxide/bicarbonate transporter. The protein is Rhesus-like glycoprotein A (rhgA) of Dictyostelium discoideum (Social amoeba).